Reading from the N-terminus, the 1794-residue chain is Protein TIC 214 (1794 aa).

6 helical membrane-spanning segments follow: residues 23–43 (VVVG…SYLF), 64–84 (FIMG…HLAL), 87–107 (PHTI…WNNH), 124–144 (LSIQ…HFIL), 172–192 (VGWL…LFWI), and 218–238 (ILSI…PSPI). The disordered stretch occupies residues 244–307 (KETSETGETE…REGVNGKEKT (64 aa)). Positions 248–258 (ETGETEEETDV) are enriched in acidic residues. Basic and acidic residues-rich tracts occupy residues 259-276 (EIER…KEGS) and 286-307 (SEEK…KEKT).

This sequence belongs to the TIC214 family. Part of the Tic complex.

It localises to the plastid. The protein localises to the chloroplast inner membrane. Its function is as follows. Involved in protein precursor import into chloroplasts. May be part of an intermediate translocation complex acting as a protein-conducting channel at the inner envelope. In Amborella trichopoda, this protein is Protein TIC 214.